Consider the following 902-residue polypeptide: Nitrate reductase [NADPH] (902 aa).

Residue cysteine 182 participates in Mo-molybdopterin binding. The region spanning 537–612 is the Cytochrome b5 heme-binding domain; the sequence is LPLIFADEVA…LKKYCIGRCS (76 aa). Histidine 572 and histidine 595 together coordinate heme. Positions 637-751 constitute an FAD-binding FR-type domain; it reads RTKVPIVLIS…KGPLGHFTYY (115 aa). Residues 689 to 692, 708 to 712, phenylalanine 713, 725 to 727, and threonine 778 contribute to the FAD site; these read RAYT, LIKVY, and LFS. 872–879 contributes to the NADP(+) binding site; it reads CMCGPEGM.

This sequence belongs to the nitrate reductase family. As to quaternary structure, homodimer. Requires FAD as cofactor. The cofactor is heme. It depends on Mo-molybdopterin as a cofactor.

The catalysed reaction is nitrite + NADP(+) + H2O = nitrate + NADPH + H(+). Its function is as follows. Nitrate reductase is a key enzyme involved in the first step of nitrate assimilation in plants, fungi and bacteria. The sequence is that of Nitrate reductase [NADPH] (NIAA) from Phytophthora infestans (Potato late blight agent).